Reading from the N-terminus, the 289-residue chain is Phosphatidylglycerol--prolipoprotein diacylglyceryl transferase (289 aa).

The next 4 membrane-spanning stretches (helical) occupy residues Ile-21–Ile-41, Ile-53–Ala-73, Ile-95–Leu-115, and Ile-122–Gly-142. Arg-143 lines the a 1,2-diacyl-sn-glycero-3-phospho-(1'-sn-glycerol) pocket. Transmembrane regions (helical) follow at residues Pro-182 to Phe-202, Gly-215 to Leu-235, and Ile-247 to Tyr-267.

The protein belongs to the Lgt family.

The protein localises to the cell inner membrane. The enzyme catalyses L-cysteinyl-[prolipoprotein] + a 1,2-diacyl-sn-glycero-3-phospho-(1'-sn-glycerol) = an S-1,2-diacyl-sn-glyceryl-L-cysteinyl-[prolipoprotein] + sn-glycerol 1-phosphate + H(+). Its pathway is protein modification; lipoprotein biosynthesis (diacylglyceryl transfer). Catalyzes the transfer of the diacylglyceryl group from phosphatidylglycerol to the sulfhydryl group of the N-terminal cysteine of a prolipoprotein, the first step in the formation of mature lipoproteins. This Synechococcus elongatus (strain ATCC 33912 / PCC 7942 / FACHB-805) (Anacystis nidulans R2) protein is Phosphatidylglycerol--prolipoprotein diacylglyceryl transferase.